A 246-amino-acid chain; its full sequence is Protein phosphatase PhpP (246 aa).

One can recognise a PPM-type phosphatase domain in the interval 2–240 (EISLLTDVGQ…DNITVALVSM (239 aa)). 4 residues coordinate Mn(2+): Asp36, Gly37, Asp192, and Asp231.

This sequence belongs to the PP2C family. It depends on Mn(2+) as a cofactor.

It localises to the cytoplasm. It catalyses the reaction O-phospho-L-seryl-[protein] + H2O = L-seryl-[protein] + phosphate. It carries out the reaction O-phospho-L-threonyl-[protein] + H2O = L-threonyl-[protein] + phosphate. Its function is as follows. Protein phosphatase able to dephosphorylate StkP-P and other phosphorylated protein substrates. PhpP and its cognate protein kinase StkP appear to constitute a functional signaling couple in vivo, PhpP's primary role being probably to control phosphorylation levels of StkP and of its targets. PhpP thus performs an essential control of StkP activity. Also dephosphorylates DivIVA in vivo. This Streptococcus pneumoniae serotype 2 (strain D39 / NCTC 7466) protein is Protein phosphatase PhpP (phpP).